Reading from the N-terminus, the 472-residue chain is ATP synthase subunit beta (472 aa).

155–162 contributes to the ATP binding site; that stretch reads GGAGVGKT.

The protein belongs to the ATPase alpha/beta chains family. As to quaternary structure, F-type ATPases have 2 components, CF(1) - the catalytic core - and CF(0) - the membrane proton channel. CF(1) has five subunits: alpha(3), beta(3), gamma(1), delta(1), epsilon(1). CF(0) has three main subunits: a(1), b(2) and c(9-12). The alpha and beta chains form an alternating ring which encloses part of the gamma chain. CF(1) is attached to CF(0) by a central stalk formed by the gamma and epsilon chains, while a peripheral stalk is formed by the delta and b chains.

Its subcellular location is the cell inner membrane. It carries out the reaction ATP + H2O + 4 H(+)(in) = ADP + phosphate + 5 H(+)(out). Produces ATP from ADP in the presence of a proton gradient across the membrane. The catalytic sites are hosted primarily by the beta subunits. This is ATP synthase subunit beta from Fervidobacterium nodosum (strain ATCC 35602 / DSM 5306 / Rt17-B1).